The sequence spans 181 residues: Large ribosomal subunit protein uL6 (181 aa).

It belongs to the universal ribosomal protein uL6 family. As to quaternary structure, part of the 50S ribosomal subunit.

Its function is as follows. This protein binds to the 23S rRNA, and is important in its secondary structure. It is located near the subunit interface in the base of the L7/L12 stalk, and near the tRNA binding site of the peptidyltransferase center. In Phytoplasma mali (strain AT), this protein is Large ribosomal subunit protein uL6.